The sequence spans 472 residues: tRNA-2-methylthio-N(6)-dimethylallyladenosine synthase (472 aa).

Residues 22 to 142 (RKVFVKTYGC…LPDALKRARA (121 aa)) enclose the MTTase N-terminal domain. 6 residues coordinate [4Fe-4S] cluster: Cys-31, Cys-67, Cys-105, Cys-183, Cys-187, and Cys-190. The region spanning 169-403 (RARGVTAFLT…LLVKQQRGFA (235 aa)) is the Radical SAM core domain. The TRAM domain maps to 404–466 (EACVGREIDL…PNSLFAEMIG (63 aa)).

The protein belongs to the methylthiotransferase family. MiaB subfamily. Monomer. The cofactor is [4Fe-4S] cluster.

Its subcellular location is the cytoplasm. The enzyme catalyses N(6)-dimethylallyladenosine(37) in tRNA + (sulfur carrier)-SH + AH2 + 2 S-adenosyl-L-methionine = 2-methylsulfanyl-N(6)-dimethylallyladenosine(37) in tRNA + (sulfur carrier)-H + 5'-deoxyadenosine + L-methionine + A + S-adenosyl-L-homocysteine + 2 H(+). In terms of biological role, catalyzes the methylthiolation of N6-(dimethylallyl)adenosine (i(6)A), leading to the formation of 2-methylthio-N6-(dimethylallyl)adenosine (ms(2)i(6)A) at position 37 in tRNAs that read codons beginning with uridine. This Rhizobium meliloti (strain 1021) (Ensifer meliloti) protein is tRNA-2-methylthio-N(6)-dimethylallyladenosine synthase.